A 614-amino-acid polypeptide reads, in one-letter code: MSNLRKFKDEERESEYGRVYAVSGPVVTAEAMSGSAMYELVRVGYYELVGEIIRLEGDMATIQVYEETSGVTVGDPVLRTGKPLSVELGPGIMGSIFDGIQRPLRDIGVMTNSIYIPKGVNTTALSRSEMWEFNPLNVRVGSHITGGDLYGVVHENTLVKQRMIVAPRAKGTVRYIAPAGNYNLEDIVLETEFDGEITKHTMLQVWPVRQPRPVTEKLPANHPLFTGQRVLDSLFPCVQGGTTAIPGAFGCGKTVISQALSKYSNSDVIIYVGCGERGNEMSEVLRDFPELTCEIDGVTESIMKRTALVANTSNMPVAAREASIYTGITLSEYFRDMGYNVAMMADSTSRWAEALREISGRLAEMPADSGYPAYLGARLATFYERAGRVKCLGNPEREGSVSIVGAVSPPGGDFSDPVTSATLGIVQVFWGLDKKLAQRKHFPSINWLISYSKYMRALDEYYDKNYPEFVPLRTKVKEILQEEEDLSEIVQLVGKASLAETDKVTLEVAKLLKDDFLQQNSYSPYDRVCPFYKTVGMLRNIMAFYETARHAVESTAQSDNKITWNTIRESMGGIMYQLSSMKFKDPVKDGEQKIKADYDQLYEDLQQAFRNLED.

Residue 247 to 254 participates in ATP binding; the sequence is GAFGCGKT.

The protein belongs to the ATPase alpha/beta chains family. As to quaternary structure, V-ATPase is a heteromultimeric enzyme made up of two complexes: the ATP-hydrolytic V1 complex and the proton translocation V0 complex. The V1 complex consists of three catalytic AB heterodimers that form a heterohexamer, three peripheral stalks each consisting of EG heterodimers, one central rotor including subunits D and F, and the regulatory subunits C and H. The proton translocation complex V0 consists of the proton transport subunit a, a ring of proteolipid subunits c9c'', rotary subunit d, subunits e and f, and the accessory subunits VhaAC45 and ATP6AP2.

The catalysed reaction is ATP + H2O + 4 H(+)(in) = ADP + phosphate + 5 H(+)(out). Its activity is regulated as follows. ATP hydrolysis occurs at the interface between the nucleotide-binding domains of subunits A and B. ATP hydrolysis triggers a conformational change in the subunits D and F, which induces a shift of subunit d. The c-ring is subsequently rotated and results in a continuous proton translocation across the membrane. Catalytic subunit of the V1 complex of vacuolar(H+)-ATPase (V-ATPase), a multisubunit enzyme composed of a peripheral complex (V1) that hydrolyzes ATP and a membrane integral complex (V0) that translocates protons. V-ATPase is responsible for acidifying and maintaining the pH of intracellular compartments and in some cell types, is targeted to the plasma membrane, where it is responsible for acidifying the extracellular environment. This is V-type proton ATPase catalytic subunit A isoform 1 (Vha68-1) from Drosophila melanogaster (Fruit fly).